Reading from the N-terminus, the 38-residue chain is ATP synthase subunit O, mitochondrial (38 aa).

Belongs to the ATPase delta chain family. F-type ATPases have 2 components, CF(1) - the catalytic core - and CF(0) - the membrane proton channel. CF(1) has five subunits: alpha(3), beta(3), gamma(1), delta(1), epsilon(1). CF(0) has three main subunits: a, b and c.

The protein resides in the mitochondrion. Its subcellular location is the mitochondrion inner membrane. Its function is as follows. Mitochondrial membrane ATP synthase (F(1)F(0) ATP synthase or Complex V) produces ATP from ADP in the presence of a proton gradient across the membrane which is generated by electron transport complexes of the respiratory chain. F-type ATPases consist of two structural domains, F(1) - containing the extramembraneous catalytic core and F(0) - containing the membrane proton channel, linked together by a central stalk and a peripheral stalk. During catalysis, ATP synthesis in the catalytic domain of F(1) is coupled via a rotary mechanism of the central stalk subunits to proton translocation. Part of the complex F(0) domain and the peripheric stalk, which acts as a stator to hold the catalytic alpha(3)beta(3) subcomplex and subunit a/ATP6 static relative to the rotary elements. In Pisum sativum (Garden pea), this protein is ATP synthase subunit O, mitochondrial.